The sequence spans 174 residues: Tat proofreading chaperone TtrD (174 aa).

Belongs to the TorD/DmsD family. As to quaternary structure, monomer.

Its subcellular location is the cytoplasm. Binds specifically to the Tat signal peptide of the TtrA subunit of the tetrathionate reductase. This Archaeoglobus fulgidus (strain ATCC 49558 / DSM 4304 / JCM 9628 / NBRC 100126 / VC-16) protein is Tat proofreading chaperone TtrD (ttrD).